A 168-amino-acid polypeptide reads, in one-letter code: 2-oxo-4-hydroxy-4-carboxy-5-ureidoimidazoline decarboxylase (168 aa).

Catalysis depends on H70, which acts as the Proton donor; for OHCU decarboxylase activity. A compositionally biased stretch (basic and acidic residues) spans 70 to 79 (HPDLGERTEM). A disordered region spans residues 70 to 93 (HPDLGERTEMTDASEAEQASAELD). Substrate is bound by residues P71, 83–87 (SEAEQ), and 118–122 (FVMAV).

This sequence belongs to the OHCU decarboxylase family.

It carries out the reaction 5-hydroxy-2-oxo-4-ureido-2,5-dihydro-1H-imidazole-5-carboxylate + H(+) = (S)-allantoin + CO2. It participates in purine metabolism; urate degradation; (S)-allantoin from urate: step 3/3. Its function is as follows. Catalyzes the stereoselective decarboxylation of 2-oxo-4-hydroxy-4-carboxy-5-ureidoimidazoline (OHCU) to (S)-allantoin. The protein is 2-oxo-4-hydroxy-4-carboxy-5-ureidoimidazoline decarboxylase of Haloferax volcanii (strain ATCC 29605 / DSM 3757 / JCM 8879 / NBRC 14742 / NCIMB 2012 / VKM B-1768 / DS2) (Halobacterium volcanii).